Consider the following 300-residue polypeptide: Cation-efflux pump FieF (300 aa).

A run of 4 helical transmembrane segments spans residues 11–31 (LAAV…VFAW), 40–60 (LASL…LLVV), 81–101 (LAAL…ILTG), and 114–134 (PEVG…LVSF). Positions 45 and 49 each coordinate Zn(2+). 2 residues coordinate Zn(2+): His153 and Asp157. The next 2 helical transmembrane spans lie at 156–176 (SDLL…KGIT) and 182–202 (FALG…YDAV).

Belongs to the cation diffusion facilitator (CDF) transporter (TC 2.A.4) family. FieF subfamily. As to quaternary structure, homodimer.

Its subcellular location is the cell inner membrane. The enzyme catalyses Zn(2+)(in) + H(+)(out) = Zn(2+)(out) + H(+)(in). It catalyses the reaction Cd(2+)(in) + H(+)(out) = Cd(2+)(out) + H(+)(in). It carries out the reaction Fe(2+)(in) + H(+)(out) = Fe(2+)(out) + H(+)(in). Functionally, divalent metal cation transporter which exports Zn(2+), Cd(2+) and possibly Fe(2+). May be involved in zinc and iron detoxification by efflux. The chain is Cation-efflux pump FieF from Pectobacterium atrosepticum (strain SCRI 1043 / ATCC BAA-672) (Erwinia carotovora subsp. atroseptica).